A 393-amino-acid chain; its full sequence is DNA-directed RNA polymerase subunit Rpo1C (393 aa).

It belongs to the RNA polymerase beta' chain family. As to quaternary structure, part of the RNA polymerase complex.

It localises to the cytoplasm. The enzyme catalyses RNA(n) + a ribonucleoside 5'-triphosphate = RNA(n+1) + diphosphate. In terms of biological role, DNA-dependent RNA polymerase (RNAP) catalyzes the transcription of DNA into RNA using the four ribonucleoside triphosphates as substrates. Forms part of the jaw domain. This chain is DNA-directed RNA polymerase subunit Rpo1C, found in Halococcus morrhuae (Micrococcus morrhuae).